We begin with the raw amino-acid sequence, 242 residues long: Uridylate kinase (242 aa).

11 to 14 (KLSG) provides a ligand contact to ATP. The involved in allosteric activation by GTP stretch occupies residues 19 to 24 (GDKGVG). Residue glycine 53 coordinates UMP. 2 residues coordinate ATP: glycine 54 and arginine 58. UMP is bound by residues aspartate 73 and 134–141 (IGSPYFST). Residues asparagine 162, tyrosine 168, and aspartate 171 each contribute to the ATP site.

It belongs to the UMP kinase family. In terms of assembly, homohexamer.

It is found in the cytoplasm. It carries out the reaction UMP + ATP = UDP + ADP. It participates in pyrimidine metabolism; CTP biosynthesis via de novo pathway; UDP from UMP (UMPK route): step 1/1. Its activity is regulated as follows. Allosterically activated by GTP. Inhibited by UTP. In terms of biological role, catalyzes the reversible phosphorylation of UMP to UDP. This chain is Uridylate kinase, found in Streptococcus agalactiae serotype Ia (strain ATCC 27591 / A909 / CDC SS700).